We begin with the raw amino-acid sequence, 103 residues long: Large ribosomal subunit protein uL24 (103 aa).

Belongs to the universal ribosomal protein uL24 family. As to quaternary structure, part of the 50S ribosomal subunit.

Its function is as follows. One of two assembly initiator proteins, it binds directly to the 5'-end of the 23S rRNA, where it nucleates assembly of the 50S subunit. One of the proteins that surrounds the polypeptide exit tunnel on the outside of the subunit. The polypeptide is Large ribosomal subunit protein uL24 (Sinorhizobium fredii (strain NBRC 101917 / NGR234)).